A 386-amino-acid polypeptide reads, in one-letter code: NifS-like protein (386 aa).

Residues Ser-58–Glu-59 and Ser-184–Asn-186 contribute to the pyridoxal 5'-phosphate site.

This sequence belongs to the class-V pyridoxal-phosphate-dependent aminotransferase family. NifS/IscS subfamily. Pyridoxal 5'-phosphate serves as cofactor.

The protein localises to the virion. In Ornithodoros (relapsing fever ticks), this protein is NifS-like protein.